Here is a 364-residue protein sequence, read N- to C-terminus: DNA polymerase IV (364 aa).

In terms of domain architecture, UmuC spans 14–198; sequence IIHIDMDAFF…LPIEKFHGVG (185 aa). Mg(2+) is bound by residues aspartate 18 and aspartate 116. Glutamate 117 is an active-site residue.

It belongs to the DNA polymerase type-Y family. Monomer. It depends on Mg(2+) as a cofactor.

It localises to the cytoplasm. It catalyses the reaction DNA(n) + a 2'-deoxyribonucleoside 5'-triphosphate = DNA(n+1) + diphosphate. In terms of biological role, poorly processive, error-prone DNA polymerase involved in untargeted mutagenesis. Copies undamaged DNA at stalled replication forks, which arise in vivo from mismatched or misaligned primer ends. These misaligned primers can be extended by PolIV. Exhibits no 3'-5' exonuclease (proofreading) activity. May be involved in translesional synthesis, in conjunction with the beta clamp from PolIII. The polypeptide is DNA polymerase IV (Streptococcus pyogenes serotype M1).